Reading from the N-terminus, the 571-residue chain is Putative F-box protein At5g39460 (571 aa).

In terms of domain architecture, F-box spans 9 to 55 (ACLLLTLPEDVFAVISRFLSPSDICNLILCGKSLCALVDSEKTWLVQ).

This Arabidopsis thaliana (Mouse-ear cress) protein is Putative F-box protein At5g39460.